Reading from the N-terminus, the 415-residue chain is Magnesium-chelatase subunit ChlI, chloroplastic (415 aa).

Residues 1–67 (MASAFSPATA…APSATQQEAK (67 aa)) constitute a chloroplast transit peptide. Disulfide bonds link C93–C184 and C345–C387.

This sequence belongs to the Mg-chelatase subunits D/I family. In terms of assembly, the magnesium chelatase complex is a heterotrimer consisting of subunits CHLI, CHLD and CHLH.

The protein resides in the plastid. It localises to the chloroplast. It catalyses the reaction protoporphyrin IX + Mg(2+) + ATP + H2O = Mg-protoporphyrin IX + ADP + phosphate + 3 H(+). Its pathway is porphyrin-containing compound metabolism; chlorophyll biosynthesis. Its activity is regulated as follows. Redox regulation; active in reducing conditions, inactive in oxidizing conditions. Thioredoxins f and m mediate the reversible reductive activation of oxidized CHLI. In terms of biological role, involved in chlorophyll biosynthesis. Catalyzes the insertion of magnesium ion into protoporphyrin IX to yield Mg-protoporphyrin IX. The reaction takes place in two steps, with an ATP-dependent activation followed by an ATP-dependent chelation step. The protein is Magnesium-chelatase subunit ChlI, chloroplastic (CHLI) of Oryza sativa subsp. japonica (Rice).